The chain runs to 335 residues: Aliphatic sulfonates import ATP-binding protein SsuB (335 aa).

Positions 48 to 71 (PFASGGAFGRAPRDDDDDRRGAGD) are disordered. The ABC transporter domain maps to 74–293 (VRLTRVSKRY…ARASAAFAEL (220 aa)). ATP is bound at residue 106–113 (GRSGCGKS).

This sequence belongs to the ABC transporter superfamily. Aliphatic sulfonates importer (TC 3.A.1.17.2) family. In terms of assembly, the complex is composed of two ATP-binding proteins (SsuB), two transmembrane proteins (SsuC) and a solute-binding protein (SsuA).

It is found in the cell inner membrane. It carries out the reaction ATP + H2O + aliphatic sulfonate-[sulfonate-binding protein]Side 1 = ADP + phosphate + aliphatic sulfonateSide 2 + [sulfonate-binding protein]Side 1.. Functionally, part of the ABC transporter complex SsuABC involved in aliphatic sulfonates import. Responsible for energy coupling to the transport system. In Burkholderia thailandensis (strain ATCC 700388 / DSM 13276 / CCUG 48851 / CIP 106301 / E264), this protein is Aliphatic sulfonates import ATP-binding protein SsuB.